The sequence spans 694 residues: Outer dynein arm-docking complex subunit 1 (694 aa).

Coiled-coil stretches lie at residues 27 to 192 (ELSR…RYLN) and 222 to 259 (REEA…HLEQ). The tract at residues 271–290 (RQPDPGVVQKEEQRAWETSE) is disordered. A coiled-coil region spans residues 339–418 (NFINEQNSEL…EKIKTDIQVL (80 aa)). Disordered regions lie at residues 531–550 (QDEE…TLSS) and 571–694 (SILS…RGYN). 4 positions are modified to phosphoserine: Ser-536, Ser-542, Ser-543, and Ser-545. Low complexity predominate over residues 628 to 642 (TSSSSYLGSTGYLET). Polar residues predominate over residues 655-672 (SQSMGSEMSRGFSSGSGQ). Residues 673–687 (TSSAAPASRPSSATS) are compositionally biased toward low complexity.

This sequence belongs to the ODA1/DCC2 family. As to quaternary structure, component of the outer dynein arm-docking complex along with ODAD2, ODAD3, ODAD4 and CLXN. Interacts with ODAD3. Interacts with ODAD4; this interaction may facilitate the recruitment and/or attachment of outer dynein arm docking complex proteins,including ODAD1, ODAD3, and ODAD4 to ciliary axonemes. Interacts with DNAH9. Interacts with MNS1. Interacts with PIERCE1 and PIERCE2; the interactions link the outer dynein arms docking complex (ODA-DC) to the internal microtubule inner proteins (MIP) in cilium axoneme.

Its subcellular location is the cytoplasm. It is found in the cytoskeleton. The protein resides in the cilium axoneme. In terms of biological role, component of the outer dynein arm-docking complex that mediates outer dynein arms (ODA) binding onto the doublet microtubule. Involved in mediating assembly of both ODAs and their axonemal docking complex onto ciliary microtubules. This chain is Outer dynein arm-docking complex subunit 1 (Odad1), found in Rattus norvegicus (Rat).